A 295-amino-acid chain; its full sequence is Nucleotide-binding protein RD1_1380 (295 aa).

16 to 23 (GPSGAGRS) is an ATP binding site. Residue 63 to 66 (DPRN) coordinates GTP.

Belongs to the RapZ-like family.

Functionally, displays ATPase and GTPase activities. The sequence is that of Nucleotide-binding protein RD1_1380 from Roseobacter denitrificans (strain ATCC 33942 / OCh 114) (Erythrobacter sp. (strain OCh 114)).